The sequence spans 502 residues: Tubulin gamma chain (502 aa).

The segment covering 51–68 (ELNNSGSSPQSYPQQTKP) has biased composition (polar residues). Positions 51 to 73 (ELNNSGSSPQSYPQQTKPNGKYR) are disordered. Residue 169–175 (AGGTGSG) coordinates GTP. A compositionally biased stretch (acidic residues) spans 473-482 (DDEDDLEDGD). Positions 473 to 502 (DDEDDLEDGDGGGGGNGNGYNNIDDADMGI) are disordered.

It belongs to the tubulin family.

The protein localises to the cytoplasm. It is found in the cytoskeleton. It localises to the microtubule organizing center. Its subcellular location is the spindle pole body. Functionally, tubulin is the major constituent of microtubules. The gamma chain is found at microtubule organizing centers (MTOC) such as the spindle poles or the centrosome, suggesting that it is involved in the minus-end nucleation of microtubule assembly. This Candida albicans (Yeast) protein is Tubulin gamma chain (TUB4).